The following is a 196-amino-acid chain: Probable GTP-binding protein EngB (196 aa).

The EngB-type G domain maps to 21-195 (DVSEICLIGR…YELIDKLLGS (175 aa)). GTP contacts are provided by residues 29 to 36 (GRSNVGKS), 56 to 60 (GKTRL), 75 to 78 (DAPG), 142 to 145 (TKLD), and 174 to 176 (ISN). 2 residues coordinate Mg(2+): serine 36 and threonine 58.

It belongs to the TRAFAC class TrmE-Era-EngA-EngB-Septin-like GTPase superfamily. EngB GTPase family. It depends on Mg(2+) as a cofactor.

Necessary for normal cell division and for the maintenance of normal septation. The sequence is that of Probable GTP-binding protein EngB from Mycoplasma mycoides subsp. mycoides SC (strain CCUG 32753 / NCTC 10114 / PG1).